The chain runs to 287 residues: ATP synthase subunit a (287 aa).

6 helical membrane-spanning segments follow: residues 37–57, 96–116, 149–169, 187–207, 224–244, and 266–286; these read LDSV…MWLA, FIAP…AMDL, LGLS…IKGL, PVFA…EYVA, ELVF…LSGV, and TLQA…AHEA.

It belongs to the ATPase A chain family. In terms of assembly, F-type ATPases have 2 components, CF(1) - the catalytic core - and CF(0) - the membrane proton channel. CF(1) has five subunits: alpha(3), beta(3), gamma(1), delta(1), epsilon(1). CF(0) has three main subunits: a(1), b(2) and c(9-12). The alpha and beta chains form an alternating ring which encloses part of the gamma chain. CF(1) is attached to CF(0) by a central stalk formed by the gamma and epsilon chains, while a peripheral stalk is formed by the delta and b chains.

It is found in the cell inner membrane. Its function is as follows. Key component of the proton channel; it plays a direct role in the translocation of protons across the membrane. In Acidovorax sp. (strain JS42), this protein is ATP synthase subunit a.